We begin with the raw amino-acid sequence, 141 residues long: ATP synthase epsilon chain (141 aa).

This sequence belongs to the ATPase epsilon chain family. In terms of assembly, F-type ATPases have 2 components, CF(1) - the catalytic core - and CF(0) - the membrane proton channel. CF(1) has five subunits: alpha(3), beta(3), gamma(1), delta(1), epsilon(1). CF(0) has three main subunits: a, b and c.

It localises to the cell inner membrane. Functionally, produces ATP from ADP in the presence of a proton gradient across the membrane. This is ATP synthase epsilon chain from Pseudomonas fluorescens (strain Pf0-1).